The chain runs to 412 residues: Phosphoglycerate kinase 1 (412 aa).

Residues 28–30 (DFN), 65–68 (HQGR), R122, and R162 each bind substrate. Residues E336 and 361–364 (GGHT) each bind ATP.

This sequence belongs to the phosphoglycerate kinase family. Monomer.

The protein resides in the cytoplasm. It catalyses the reaction (2R)-3-phosphoglycerate + ATP = (2R)-3-phospho-glyceroyl phosphate + ADP. It functions in the pathway carbohydrate degradation; glycolysis; pyruvate from D-glyceraldehyde 3-phosphate: step 2/5. This chain is Phosphoglycerate kinase 1, found in Methanosarcina acetivorans (strain ATCC 35395 / DSM 2834 / JCM 12185 / C2A).